Consider the following 561-residue polypeptide: Zinc finger protein 394 (561 aa).

At Ser12 the chain carries Phosphoserine. Residue Lys40 forms a Glycyl lysine isopeptide (Lys-Gly) (interchain with G-Cter in SUMO2) linkage. The disordered stretch occupies residues 43-62; the sequence is EDSLGSWEPSYPAASPDPET. The region spanning 64 to 146 is the SCAN box domain; it reads RLHFRQLRYQ…AVVRALQRAL (83 aa). Residues 155 to 230 form the KRAB domain; the sequence is VTFEDMAVSL…LQEAFQGKRP (76 aa). Glycyl lysine isopeptide (Lys-Gly) (interchain with G-Cter in SUMO2) cross-links involve residues Lys203 and Lys228. Basic and acidic residues predominate over residues 238-247; sequence THEDRVEKQS. Residues 238–283 are disordered; that stretch reads THEDRVEKQSGDPLPLKLENSPEAEGFNSISDVNKNGSIEGEDSKN. Lys254 participates in a covalent cross-link: Glycyl lysine isopeptide (Lys-Gly) (interchain with G-Cter in SUMO2). Residues 265 to 274 show a composition bias toward polar residues; the sequence is NSISDVNKNG. Lys282 participates in a covalent cross-link: Glycyl lysine isopeptide (Lys-Gly) (interchain with G-Cter in SUMO2). 7 consecutive C2H2-type zinc fingers follow at residues 358–380, 386–408, 414–436, 442–463, 469–491, 497–519, and 525–547; these read YKCG…QRIH, YGCQ…QRTH, YTCL…QSTH, FKCE…QRLH, YKCE…HRIH, YGCS…QRIH, and YKCL…QRIH. Lys443 participates in a covalent cross-link: Glycyl lysine isopeptide (Lys-Gly) (interchain with G-Cter in SUMO2).

It belongs to the krueppel C2H2-type zinc-finger protein family.

Its subcellular location is the nucleus. Its function is as follows. May be involved in transcriptional regulation. The chain is Zinc finger protein 394 (ZNF394) from Pan paniscus (Pygmy chimpanzee).